Here is a 388-residue protein sequence, read N- to C-terminus: 4-hydroxy-3-methylbut-2-en-1-yl diphosphate synthase (flavodoxin) (388 aa).

Positions 281, 284, 316, and 323 each coordinate [4Fe-4S] cluster.

The protein belongs to the IspG family. The cofactor is [4Fe-4S] cluster.

It catalyses the reaction (2E)-4-hydroxy-3-methylbut-2-enyl diphosphate + oxidized [flavodoxin] + H2O + 2 H(+) = 2-C-methyl-D-erythritol 2,4-cyclic diphosphate + reduced [flavodoxin]. It functions in the pathway isoprenoid biosynthesis; isopentenyl diphosphate biosynthesis via DXP pathway; isopentenyl diphosphate from 1-deoxy-D-xylulose 5-phosphate: step 5/6. In terms of biological role, converts 2C-methyl-D-erythritol 2,4-cyclodiphosphate (ME-2,4cPP) into 1-hydroxy-2-methyl-2-(E)-butenyl 4-diphosphate. The sequence is that of 4-hydroxy-3-methylbut-2-en-1-yl diphosphate synthase (flavodoxin) from Arthrobacter sp. (strain FB24).